The sequence spans 301 residues: UDP-N-acetylenolpyruvoylglucosamine reductase 1 (301 aa).

The FAD-binding PCMH-type domain maps to 29 to 196 (KIGGPADILI…LEAEFQLQIG (168 aa)). R174 is a catalytic residue. S225 (proton donor) is an active-site residue. E295 is a catalytic residue.

Belongs to the MurB family. Requires FAD as cofactor.

The protein resides in the cytoplasm. It catalyses the reaction UDP-N-acetyl-alpha-D-muramate + NADP(+) = UDP-N-acetyl-3-O-(1-carboxyvinyl)-alpha-D-glucosamine + NADPH + H(+). It functions in the pathway cell wall biogenesis; peptidoglycan biosynthesis. Its function is as follows. Cell wall formation. This Bacillus thuringiensis subsp. konkukian (strain 97-27) protein is UDP-N-acetylenolpyruvoylglucosamine reductase 1.